A 462-amino-acid chain; its full sequence is Adenylosuccinate lyase (462 aa).

N(6)-(1,2-dicarboxyethyl)-AMP is bound by residues 21-22 (RY), 87-89 (KHD), and 114-115 (TS). Histidine 162 functions as the Proton donor/acceptor in the catalytic mechanism. Residue glutamine 236 coordinates N(6)-(1,2-dicarboxyethyl)-AMP. Serine 287 acts as the Proton donor/acceptor in catalysis. N(6)-(1,2-dicarboxyethyl)-AMP is bound by residues serine 288, 293-295 (KRN), and 332-336 (SAERC).

Belongs to the lyase 1 family. Adenylosuccinate lyase subfamily. In terms of assembly, homotetramer. Residues from neighboring subunits contribute catalytic and substrate-binding residues to each active site.

The enzyme catalyses N(6)-(1,2-dicarboxyethyl)-AMP = fumarate + AMP. It carries out the reaction (2S)-2-[5-amino-1-(5-phospho-beta-D-ribosyl)imidazole-4-carboxamido]succinate = 5-amino-1-(5-phospho-beta-D-ribosyl)imidazole-4-carboxamide + fumarate. Its pathway is purine metabolism; AMP biosynthesis via de novo pathway; AMP from IMP: step 2/2. The protein operates within purine metabolism; IMP biosynthesis via de novo pathway; 5-amino-1-(5-phospho-D-ribosyl)imidazole-4-carboxamide from 5-amino-1-(5-phospho-D-ribosyl)imidazole-4-carboxylate: step 2/2. Its function is as follows. Catalyzes two reactions in de novo purine nucleotide biosynthesis. Catalyzes the breakdown of 5-aminoimidazole- (N-succinylocarboxamide) ribotide (SAICAR or 2-[5-amino-1-(5-phospho-beta-D-ribosyl)imidazole-4-carboxamido]succinate) to 5-aminoimidazole-4-carboxamide ribotide (AICAR or 5-amino-1-(5-phospho-beta-D-ribosyl)imidazole-4-carboxamide) and fumarate, and of adenylosuccinate (ADS or N(6)-(1,2-dicarboxyethyl)-AMP) to adenosine monophosphate (AMP) and fumarate. This is Adenylosuccinate lyase (purB) from Methanocaldococcus jannaschii (strain ATCC 43067 / DSM 2661 / JAL-1 / JCM 10045 / NBRC 100440) (Methanococcus jannaschii).